A 365-amino-acid polypeptide reads, in one-letter code: Peptide chain release factor 2 (365 aa).

Gln252 bears the N5-methylglutamine mark.

This sequence belongs to the prokaryotic/mitochondrial release factor family. In terms of processing, methylated by PrmC. Methylation increases the termination efficiency of RF2.

The protein resides in the cytoplasm. In terms of biological role, peptide chain release factor 2 directs the termination of translation in response to the peptide chain termination codons UGA and UAA. This is Peptide chain release factor 2 from Klebsiella pneumoniae (strain 342).